The primary structure comprises 1663 residues: Complement C3 (1663 aa).

Positions 1–24 (MGPASGSQLLVLLLLLASSPLALG) are cleaved as a signal peptide. Position 40 is a phosphoserine (Ser40). 13 cysteine pairs are disulfide-bonded: Cys559/Cys816, Cys626/Cys661, Cys693/Cys720, Cys694/Cys727, Cys707/Cys728, Cys873/Cys1513, Cys1101/Cys1158, Cys1358/Cys1489, Cys1389/Cys1458, Cys1506/Cys1511, Cys1518/Cys1590, Cys1537/Cys1661, and Cys1637/Cys1646. The residue at position 671 (Ser671) is a Phosphoserine. One can recognise an Anaphylatoxin-like domain in the interval 693–728 (CCEDGMRDIPMRYSCQRRARLITQGENCIKAFIDCC). The N-linked (GlcNAc...) asparagine glycan is linked to Asn939. At Ser968 the chain carries Phosphoserine. The segment at residues 1010–1013 (CGEQ) is a cross-link (isoglutamyl cysteine thioester (Cys-Gln)). Ser1321 is modified (phosphoserine). One can recognise an NTR domain in the interval 1518–1661 (CFMQQSQEKI…FTESMVVYGC (144 aa)). Ser1573 carries the post-translational modification Phosphoserine. The N-linked (GlcNAc...) asparagine glycan is linked to Asn1617. Positions 1634–1659 (AEECQDQKYQKQCEELGAFTESMVVY) are interaction with CFP/properdin.

In absence of complement activation, the C3 precursor is first processed by the removal of 4 Arg residues, forming two chains, beta and alpha, linked by a disulfide bond. In terms of assembly, complement C3b is composed of complement C3b and complement C3 beta chains that are associated via disulfide bonds. Non-enzymatic component of the C5 convertase, also named C4bC2bC3b, composed of the serine protease complement C2b (C2), complement C3b, as well as complement C4b (C4). Non-enzymatic component of the C5 convertase of the alternative complement pathways composed of the serine protease complement CFB and complement C3b. Interacts with CFP; interaction takes place together with CFB in the alternative complement system and allows the complex to become active. Interacts with CR1 (via Sushi 8 and Sushi 9 domains). Interacts with CFH. As to quaternary structure, interacts with CFH. Interacts with CR2. During pregnancy, C3dg exists as a complex (probably a 2:2:2 heterohexamer) with AGT and the proform of PRG2. Interacts with CR2 (via the N-terminal Sushi domains 1 and 2). Post-translationally, C3 precursor is first processed by the removal of 4 Arg residues, forming two chains, beta and alpha, linked by a disulfide bond. During activation of the complement systems, the alpha chain is cleaved into C3a and C3b by the C3 convertase: C3b stays linked to the beta chain, while C3a is released in the plasma. The alpha chain is cleaved by the serine protease complement C2b component of the C3 convertase to generate C3a and C3b following activation by the classical, lectin and GZMK complement systems. The alpha chain is cleaved by CFB component of the C3 convertase to generate C3a and C3b following activation by the alternative complement system. C3a is further processed by carboxypeptidases to release the C-terminal arginine residue generating the acylation stimulating protein (ASP). Levels of ASP are increased in adipocytes in the postprandial period and by insulin and dietary chylomicrons. In terms of processing, complement C3b is rapidly split in two positions by factor I (CFI) and a cofactor (CFH) to form iC3b (inactivated C3b) and C3f which is released. CFI and CFH catalyze proteolytic degradation of already-deposited complement C3b. Then iC3b is slowly cleaved (possibly by CFI) to form C3c (beta chain + alpha' chain fragment 1 + alpha' chain fragment 2), C3dg and C3f. Other proteases produce other fragments such as C3d or C3g. Post-translationally, upon activation, the internal thioester bond reacts with carbohydrate antigens on the target surface to form amide or ester bonds, leading to covalent association with the surface of pathogens. Complement C3b interacts with complement C4b via a thioester linkage. In terms of processing, phosphorylated by FAM20C in the extracellular medium.

It is found in the secreted. The protein resides in the cell surface. With respect to regulation, complement activation is inhibited by VSIG4. Functionally, precursor of non-enzymatic components of the classical, alternative, lectin and GZMK complement pathways, which consist in a cascade of proteins that leads to phagocytosis and breakdown of pathogens and signaling that strengthens the adaptive immune system. In terms of biological role, non-enzymatic component of C5 convertase. Generated following cleavage by C3 convertase, it covalently attaches to the surface of pathogens, where it acts as an opsonin that marks the surface of antigens for removal. Complement C3b binds covalently via its reactive thioester, to cell surface carbohydrates or immune aggregates. Together with complement C4b, it then recruits the serine protease complement C2b to form the C5 convertase, which cleaves and activate C5, the next component of the complement pathways. In the alternative complement pathway, recruits the serine protease CFB to form the C5 convertase that cleaves and activates C5. Its function is as follows. Mediator of local inflammatory process released following cleavage by C3 convertase. Acts by binding to its receptor, C3AR1, activating G protein-coupled receptor signaling, promoting the phosphorylation, ARRB2-mediated internalization and endocytosis of C3AR1. C3a anaphylatoxin stimulates the activation of immune cells such as mast cells and basophilic leukocytes to release inflammation agents, such as cytokines, chemokines and histamine, which promote inflammation development. Also acts as potent chemoattractant for the migration of macrophages and neutrophils to the inflamed tissues, resulting in neutralization of the inflammatory triggers by multiple ways, such as phagocytosis and generation of reactive oxidants. Adipogenic hormone that stimulates triglyceride synthesis and glucose transport in adipocytes, regulating fat storage and playing a role in postprandial triglyceride clearance. Appears to stimulate triglyceride synthesis via activation of the PLC, MAPK and AKT signaling pathways. Acts by binding to its receptor, C5AR2, activating G protein-coupled receptor signaling, promoting the phosphorylation, ARRB2-mediated internalization and endocytosis of C5AR2. Functionally, acts as a chemoattractant for neutrophils in chronic inflammation. The polypeptide is Complement C3 (Mus musculus (Mouse)).